Consider the following 264-residue polypeptide: Major prion protein (264 aa).

The signal sequence occupies residues M1–C24. The interaction with ADGRG6 stretch occupies residues K25–Y41. The segment at K25 to A241 is interaction with GRB2, ERI3 and SYN1. Positions P28–N119 are disordered. 6 consecutive repeat copies span residues P54–Q62, P63–Q70, P71–Q78, P79–Q86, P87–Q94, and P95–Q103. The interval P54 to Q103 is 6 X 8 AA tandem repeats of P-H-G-G-G-W-G-Q. Gly residues predominate over residues Q55 to H107. 12 residues coordinate Cu(2+): H72, G73, G74, H80, G81, G82, H88, G89, G90, H96, G98, and G99. An intrachain disulfide couples C190 to C225. N192 and N208 each carry an N-linked (GlcNAc...) asparagine glycan. A241 carries GPI-anchor amidated alanine lipidation. Residues S242–G264 constitute a propeptide, removed in mature form.

It belongs to the prion family. In terms of assembly, monomer and homodimer. Has a tendency to aggregate into amyloid fibrils containing a cross-beta spine, formed by a steric zipper of superposed beta-strands. Soluble oligomers may represent an intermediate stage on the path to fibril formation. Copper binding may promote oligomerization. Interacts with GRB2, APP, ERI3/PRNPIP and SYN1. Mislocalized cytosolically exposed PrP interacts with MGRN1; this interaction alters MGRN1 subcellular location and causes lysosomal enlargement. Interacts with APP. Interacts with KIAA1191. Interacts with ADGRG6.

It localises to the cell membrane. The protein resides in the golgi apparatus. Its function is as follows. Its primary physiological function is unclear. May play a role in neuronal development and synaptic plasticity. May be required for neuronal myelin sheath maintenance. May promote myelin homeostasis through acting as an agonist for ADGRG6 receptor. May play a role in iron uptake and iron homeostasis. Soluble oligomers are toxic to cultured neuroblastoma cells and induce apoptosis (in vitro). Association with GPC1 (via its heparan sulfate chains) targets PRNP to lipid rafts. Also provides Cu(2+) or Zn(2+) for the ascorbate-mediated GPC1 deaminase degradation of its heparan sulfate side chains. This is Major prion protein (PRNP) from Bos indicus x Bos taurus (Hybrid cattle).